A 327-amino-acid chain; its full sequence is GMP reductase (327 aa).

Cys-175 (thioimidate intermediate) is an active-site residue. Position 204-227 (204-227 (IIADGGIRTHGDIAKSIRFGASMV)) interacts with NADP(+).

This sequence belongs to the IMPDH/GMPR family. GuaC type 2 subfamily.

It carries out the reaction IMP + NH4(+) + NADP(+) = GMP + NADPH + 2 H(+). Its function is as follows. Catalyzes the irreversible NADPH-dependent deamination of GMP to IMP. It functions in the conversion of nucleobase, nucleoside and nucleotide derivatives of G to A nucleotides, and in maintaining the intracellular balance of A and G nucleotides. This chain is GMP reductase, found in Exiguobacterium sp. (strain ATCC BAA-1283 / AT1b).